Consider the following 71-residue polypeptide: Biotinylated protein TB7.3 homolog (71 aa).

The 70-residue stretch at 2 to 71 (AEDVRAEIVA…QAGHLIAVID (70 aa)) folds into the Biotinyl-binding domain. Lysine 37 is modified (N6-biotinyllysine).

The polypeptide is Biotinylated protein TB7.3 homolog (Mycolicibacterium smegmatis (strain ATCC 700084 / mc(2)155) (Mycobacterium smegmatis)).